The following is a 162-amino-acid chain: Nitric oxide synthase, inducible (162 aa).

Residues 24–37 are compositionally biased toward polar residues; it reads LQYHSLSKQQNESP. Residues 24–65 are disordered; the sequence is LQYHSLSKQQNESPQPLVGTGKKSPESLVKPDATPLSSPRHV. Zn(2+)-binding residues include C90 and C95. S98 provides a ligand contact to (6R)-L-erythro-5,6,7,8-tetrahydrobiopterin. E132 provides a ligand contact to L-arginine. FAD is bound at residue H160.

Belongs to the NOS family. Homodimer. Interacts with NHERF1. Interacts with GAPDH; induced by oxidatively-modified low-densitity lipoprotein (LDL(ox)). Interacts with S100A8 and S100A9 to form the iNOS-S100A8/9 transnitrosylase complex. Interacts with SPSB1, SPSB2 and SPSB4. Interacts with ELOC and CUL5 in the presence of SPSB1 or SPSB2 or SPSB4. Forms a complex with ASL, ASS1 and HSP90AA1; the complex regulates cell-autonomous L-arginine synthesis and citrulline recycling while channeling extracellular L-arginine to nitric oxide synthesis pathway. The cofactor is heme b. It depends on FAD as a cofactor. Requires FMN as cofactor. (6R)-L-erythro-5,6,7,8-tetrahydrobiopterin is required as a cofactor. In terms of processing, polyubiquitinated; mediated by SPSB1, SPSB2 and SPSB4, leading to proteasomal degradation.

Its subcellular location is the cytoplasm. It is found in the cytosol. It carries out the reaction 2 L-arginine + 3 NADPH + 4 O2 + H(+) = 2 L-citrulline + 2 nitric oxide + 3 NADP(+) + 4 H2O. With respect to regulation, regulated by calcium/calmodulin. Produces nitric oxide (NO) which is a messenger molecule with diverse functions throughout the body. In macrophages, NO mediates tumoricidal and bactericidal actions. Also has nitrosylase activity and mediates cysteine S-nitrosylation of cytoplasmic target proteins such PTGS2/COX2. As component of the iNOS-S100A8/9 transnitrosylase complex involved in the selective inflammatory stimulus-dependent S-nitrosylation of GAPDH implicated in regulation of the GAIT complex activity and probably multiple targets including ANXA5, EZR, MSN and VIM. Involved in inflammation, enhances the synthesis of pro-inflammatory mediators such as IL6 and IL8. This Macaca mulatta (Rhesus macaque) protein is Nitric oxide synthase, inducible (NOS2).